A 198-amino-acid chain; its full sequence is ADP-ribosylation factor-like protein 3 (198 aa).

M1 is modified (N-acetylmethionine). 24 to 31 contributes to the GTP binding site; sequence GLDNAGKT. Residue K50 forms a Glycyl lysine isopeptide (Lys-Gly) (interchain with G-Cter in ubiquitin) linkage. Residues 74 to 78 and 133 to 136 each bind GTP; these read DVGGQ and NKQD.

This sequence belongs to the small GTPase superfamily. Arf family. As to quaternary structure, interacts with SYS1 and SLO1.

Its subcellular location is the golgi apparatus. Involved in the targeting of ARL1 to the Golgi. Can bind and hydrolyze GTP. The protein is ADP-ribosylation factor-like protein 3 (ARL3) of Saccharomyces cerevisiae (strain ATCC 204508 / S288c) (Baker's yeast).